The sequence spans 328 residues: UDP-glucose 4-epimerase (328 aa).

Thr-119 contacts substrate. Tyr-143 functions as the Proton acceptor in the catalytic mechanism.

Belongs to the NAD(P)-dependent epimerase/dehydratase family. The cofactor is NAD(+).

The enzyme catalyses UDP-alpha-D-glucose = UDP-alpha-D-galactose. It functions in the pathway carbohydrate metabolism; galactose metabolism. It participates in glycan metabolism; exopolysaccharide biosynthesis. The polypeptide is UDP-glucose 4-epimerase (exoB) (Rhizobium meliloti (strain 1021) (Ensifer meliloti)).